The primary structure comprises 289 residues: ATP synthase mitochondrial F1 complex assembly factor 2 (289 aa).

The transit peptide at 1–40 (MWRRCLRLRDVGRRLLNLPRSGLTASEGLGPKLPTPIRAY) directs the protein to the mitochondrion. Lysine 133 bears the N6-succinyllysine mark.

It belongs to the ATP12 family. In terms of assembly, interacts with ATP5F1B; involved in the assembly of the F1 component of the mitochondrial ATP synthase (ATPase). Interacts with FMC1.

The protein localises to the mitochondrion inner membrane. In terms of biological role, plays a role in the assembly of the F1 component of the mitochondrial ATP synthase (ATPase). The protein is ATP synthase mitochondrial F1 complex assembly factor 2 (ATPAF2) of Bos taurus (Bovine).